Here is a 470-residue protein sequence, read N- to C-terminus: Methylenetetrahydrofolate--tRNA-(uracil-5-)-methyltransferase TrmFO (470 aa).

Residue 10–15 participates in FAD binding; it reads GAGLAG.

Belongs to the MnmG family. TrmFO subfamily. It depends on FAD as a cofactor.

It localises to the cytoplasm. The enzyme catalyses uridine(54) in tRNA + (6R)-5,10-methylene-5,6,7,8-tetrahydrofolate + NADH + H(+) = 5-methyluridine(54) in tRNA + (6S)-5,6,7,8-tetrahydrofolate + NAD(+). It carries out the reaction uridine(54) in tRNA + (6R)-5,10-methylene-5,6,7,8-tetrahydrofolate + NADPH + H(+) = 5-methyluridine(54) in tRNA + (6S)-5,6,7,8-tetrahydrofolate + NADP(+). In terms of biological role, catalyzes the folate-dependent formation of 5-methyl-uridine at position 54 (M-5-U54) in all tRNAs. This Prochlorococcus marinus (strain MIT 9301) protein is Methylenetetrahydrofolate--tRNA-(uracil-5-)-methyltransferase TrmFO.